A 191-amino-acid chain; its full sequence is uncharacterized protein (191 aa).

This is an uncharacterized protein from Archaeoglobus fulgidus (strain ATCC 49558 / DSM 4304 / JCM 9628 / NBRC 100126 / VC-16).